Here is a 553-residue protein sequence, read N- to C-terminus: MSEEQNLRPVYDDDQPGEDTYKRGAIYKQTRSRKADYEDGENSEKRQKPNDTDNGPTAVVTDLSNEKKETRSKDKDESVALAVDADGNPIPQEVRLPKRKVAVMIGYCGTGYHGMQYNPPNDTIEKELFEAFVRAGAISKANSTDLKKNGFQRAARTDKGVHAGGNVISLKLIIEDPEVKEKINNELPDQIRVWDISRVNKAFDCRKMCSSRWYEYLLPTYSLIGPKPSTYLYNEIEASKKEIPNVIQDDVESAQFWEAFSTEAESKFTKEELEEIAAFVMPKDSFDENNETYQKSKAFKKLEAEHKRAYRISKERLDRFRSALKQYEGTFNFHNFTLGKDFNDPSAKRFMKQITVSEPFVIGEAKTEWVSIKIHGQSFMLHQIRKMISMATLITRCFSPLERIRQAYGQEKINIPKAPALGLLLEAPVYDGYNTRLQEFGYDPIDFSKYQSEMDTFKMKHIYDKIYLEEVNENVFNAFFSYIDTFNPSYNISQEQQQLKGQELQQPSQAVELVTEDLEQKAPSDPTPSDEKGKKPQRPIFDFLTARGIQLQD.

Positions 1–78 (MSEEQNLRPV…ETRSKDKDES (78 aa)) are disordered. Basic and acidic residues-rich tracts occupy residues 33–51 (RKAD…KPND) and 64–78 (SNEK…KDES). The Nucleophile role is filled by aspartate 158. The disordered stretch occupies residues 517–539 (DLEQKAPSDPTPSDEKGKKPQRP).

This sequence belongs to the tRNA pseudouridine synthase TruA family. It depends on Zn(2+) as a cofactor.

It is found in the nucleus. It catalyses the reaction a uridine in tRNA = a pseudouridine in tRNA. It carries out the reaction uridine in snRNA = pseudouridine in snRNA. The catalysed reaction is a uridine in mRNA = a pseudouridine in mRNA. Its function is as follows. Formation of pseudouridine at positions 27 and 28 in the anticodon stem and loop of transfer RNAs; at positions 34 and 36 of intron-containing precursor tRNA(Ile) and at position 35 in the intron-containing tRNA(Tyr). Catalyzes pseudouridylation at position 44 in U2 snRNA. Also catalyzes pseudouridylation of mRNAs. This is tRNA pseudouridine synthase 1 (PUS1) from Kluyveromyces lactis (strain ATCC 8585 / CBS 2359 / DSM 70799 / NBRC 1267 / NRRL Y-1140 / WM37) (Yeast).